Consider the following 147-residue polypeptide: UPF0306 protein KPN78578_35330 (147 aa).

This sequence belongs to the UPF0306 family.

This is UPF0306 protein KPN78578_35330 from Klebsiella pneumoniae subsp. pneumoniae (strain ATCC 700721 / MGH 78578).